The sequence spans 396 residues: Interleukin-3 receptor subunit alpha (396 aa).

The signal sequence occupies residues 1–16 (MAANLWLILGLLASHS). Topologically, residues 17–331 (SDLAAVREAP…VCPPEVMPVK (315 aa)) are extracellular. 5 cysteine pairs are disulfide-bonded: Cys-62/Cys-79, Cys-87/Cys-223, Cys-125/Cys-134, Cys-165/Cys-187, and Cys-245/Cys-323. The N-linked (GlcNAc...) asparagine glycan is linked to Asn-91. N-linked (GlcNAc...) asparagine glycosylation is found at Asn-213, Asn-246, Asn-272, and Asn-283. The short motif at 312-316 (LSSWS) is the WSXWS motif element. Residues 332–355 (TALVTSVATVLGAGLVAAGLLLWW) form a helical membrane-spanning segment. The Cytoplasmic segment spans residues 356–396 (RKSLLYRLCPPIPRLRLPLAGEMVVWEPALEDCEVTPVTDA). Lys-357 participates in a covalent cross-link: Glycyl lysine isopeptide (Lys-Gly) (interchain with G-Cter in ubiquitin). Residues 363–371 (LCPPIPRLR) carry the Box 1 motif motif.

It belongs to the type I cytokine receptor family. Type 5 subfamily. As to quaternary structure, interacts with IL3. Heterodimer of an alpha and a beta subunit. The beta subunit is common to the IL3, IL5 and GM-CSF receptors. In terms of processing, ubiquitinated at Lys-357 by RNFT2 in response to IL3. Ubiquitination leads ligand-induced degradation by the proteasome. Ubiquitinated by RNF128 via 'Lys-27'-linked polyubiquitination, facilitating its degradation through the lysosomal pathway.

The protein localises to the cell membrane. It localises to the endomembrane system. Its function is as follows. Cell surface receptor for IL3 expressed on hematopoietic progenitor cells, monocytes and B-lymphocytes that controls the production and differentiation of hematopoietic progenitor cells into lineage-restricted cells. Ligand stimulation rapidly induces hetrodimerization with IL3RB, phosphorylation and enzyme activity of effector proteins such as JAK2 and PI3K that play a role in signaling cell proliferation and differentiation. Activation of JAK2 leads to STAT5-mediated transcriptional program. This chain is Interleukin-3 receptor subunit alpha (Il3ra), found in Mus musculus (Mouse).